The chain runs to 777 residues: 5-methyltetrahydropteroyltriglutamate--homocysteine methyltransferase (777 aa).

Residues 17 to 20 (RELK) and lysine 132 contribute to the 5-methyltetrahydropteroyltri-L-glutamate site. L-homocysteine-binding positions include 455 to 457 (IGS) and glutamate 508. Residues 455–457 (IGS) and glutamate 508 each bind L-methionine. Residues 539 to 540 (RC) and tryptophan 585 contribute to the 5-methyltetrahydropteroyltri-L-glutamate site. Aspartate 623 serves as a coordination point for L-homocysteine. L-methionine is bound at residue aspartate 623. Glutamate 629 serves as a coordination point for 5-methyltetrahydropteroyltri-L-glutamate. Zn(2+) contacts are provided by histidine 665, cysteine 667, and glutamate 689. Histidine 718 functions as the Proton donor in the catalytic mechanism. Cysteine 750 provides a ligand contact to Zn(2+).

This sequence belongs to the vitamin-B12 independent methionine synthase family. Zn(2+) is required as a cofactor.

It carries out the reaction 5-methyltetrahydropteroyltri-L-glutamate + L-homocysteine = tetrahydropteroyltri-L-glutamate + L-methionine. Its pathway is amino-acid biosynthesis; L-methionine biosynthesis via de novo pathway; L-methionine from L-homocysteine (MetE route): step 1/1. Its function is as follows. Catalyzes the transfer of a methyl group from 5-methyltetrahydrofolate to homocysteine resulting in methionine formation. The polypeptide is 5-methyltetrahydropteroyltriglutamate--homocysteine methyltransferase (Caulobacter vibrioides (strain ATCC 19089 / CIP 103742 / CB 15) (Caulobacter crescentus)).